A 1100-amino-acid chain; its full sequence is Conjugal transfer protein TraA (1100 aa).

Gly-404–Thr-411 contacts ATP.

Belongs to the MobA/MobL family.

The polypeptide is Conjugal transfer protein TraA (traA) (Rhizobium radiobacter (Agrobacterium tumefaciens)).